A 200-amino-acid chain; its full sequence is Large ribosomal subunit protein bL25 (200 aa).

Residues 1-20 (MEARELKANVRKESGKEQAR) are disordered.

This sequence belongs to the bacterial ribosomal protein bL25 family. CTC subfamily. In terms of assembly, part of the 50S ribosomal subunit; part of the 5S rRNA/L5/L18/L25 subcomplex. Contacts the 5S rRNA. Binds to the 5S rRNA independently of L5 and L18.

In terms of biological role, this is one of the proteins that binds to the 5S RNA in the ribosome where it forms part of the central protuberance. This chain is Large ribosomal subunit protein bL25, found in Syntrophus aciditrophicus (strain SB).